Consider the following 874-residue polypeptide: Alanine--tRNA ligase (874 aa).

Zn(2+) contacts are provided by His-562, His-566, Cys-665, and His-669.

The protein belongs to the class-II aminoacyl-tRNA synthetase family. Zn(2+) is required as a cofactor.

The protein localises to the cytoplasm. The enzyme catalyses tRNA(Ala) + L-alanine + ATP = L-alanyl-tRNA(Ala) + AMP + diphosphate. Its function is as follows. Catalyzes the attachment of alanine to tRNA(Ala) in a two-step reaction: alanine is first activated by ATP to form Ala-AMP and then transferred to the acceptor end of tRNA(Ala). Also edits incorrectly charged Ser-tRNA(Ala) and Gly-tRNA(Ala) via its editing domain. This Pseudomonas savastanoi pv. phaseolicola (strain 1448A / Race 6) (Pseudomonas syringae pv. phaseolicola (strain 1448A / Race 6)) protein is Alanine--tRNA ligase.